A 160-amino-acid chain; its full sequence is MGVTKKPDLNDPVLRAKLAKGMGHNYYGEPAWPNDLLYIFPVVILGTIACNVGLAVLEPSMIGEPADPFATPLEILPEWYFFPVFQILRTVPNKLLGVLLMVSVPTGLLTVPFLENVNKFQNPFRRPVATTVFLIGTAVALWLGIGATLPIEKSLTLGLF.

3 helical membrane-spanning segments follow: residues 36–56 (LLYI…GLAV), 95–115 (LLGV…PFLE), and 131–151 (TVFL…TLPI).

The protein belongs to the cytochrome b family. PetD subfamily. The 4 large subunits of the cytochrome b6-f complex are cytochrome b6, subunit IV (17 kDa polypeptide, petD), cytochrome f and the Rieske protein, while the 4 small subunits are petG, petL, petM and petN. The complex functions as a dimer.

The protein resides in the plastid. It localises to the chloroplast thylakoid membrane. Its function is as follows. Component of the cytochrome b6-f complex, which mediates electron transfer between photosystem II (PSII) and photosystem I (PSI), cyclic electron flow around PSI, and state transitions. The sequence is that of Cytochrome b6-f complex subunit 4 from Oryza sativa (Rice).